A 372-amino-acid polypeptide reads, in one-letter code: Cytochrome b (372 aa).

A run of 4 helical transmembrane segments spans residues 25–45 (FGSM…FLAI), 69–90 (WIMQ…YIHI), 105–125 (WLSG…GYVL), and 170–190 (FFAL…IHII). Histidine 75 and histidine 89 together coordinate heme b. Residues histidine 174 and histidine 188 each contribute to the heme b site. A ubiquinone is bound at residue histidine 193. Helical transmembrane passes span 218–238 (YKDM…LSFS), 280–300 (LGGA…PFTH), 312–332 (LSQI…WTAS), and 339–358 (FISI…ITIP).

This sequence belongs to the cytochrome b family. As to quaternary structure, the cytochrome bc1 complex contains 3 respiratory subunits (MT-CYB, CYC1 and UQCRFS1), 2 core proteins (UQCRC1 and UQCRC2) and probably 6 low-molecular weight proteins. The cofactor is heme b.

It is found in the mitochondrion inner membrane. Its function is as follows. Component of the ubiquinol-cytochrome c reductase complex (complex III or cytochrome b-c1 complex) that is part of the mitochondrial respiratory chain. The b-c1 complex mediates electron transfer from ubiquinol to cytochrome c. Contributes to the generation of a proton gradient across the mitochondrial membrane that is then used for ATP synthesis. The protein is Cytochrome b (MT-CYB) of Naja annulata annulata (Banded water cobra).